The following is a 1078-amino-acid chain: Lon protease homolog, mitochondrial (1078 aa).

The transit peptide at 1–27 (MIKASKCNKPRALFLVRVSIPRTFIRN) directs the protein to the mitochondrion. Residues 71-123 (SEKEKQPSTDKSNDKDKPSRKEKGKDKEKENEEKKDINMDEKYEINEETDTKP) are compositionally biased toward basic and acidic residues. Residues 71 to 179 (SEKEKQPSTD…KEFLSPSDSG (109 aa)) are disordered. Low complexity predominate over residues 127–157 (PNNPVSSKSNISSSSGGDNNNNNNNNNNNND). The span at 158–172 (SDGKNDDGSPKDKEF) shows a compositional bias: basic and acidic residues. The Lon N-terminal domain maps to 182-400 (PPFLAIAMKD…LSLQLLQVEA (219 aa)). 548–555 (GPPGTGKT) is an ATP binding site. Residues 792-825 (NSPIEYIQSNTEVKAETTTESQQEQEKEKEKDEE) form a disordered region. Positions 815 to 825 (EQEKEKEKDEE) are enriched in basic and acidic residues. The Lon proteolytic domain maps to 861-1049 (TLNPGVATGL…SEVFEHLFQG (189 aa)). Catalysis depends on residues serine 955 and lysine 998.

It belongs to the peptidase S16 family. As to quaternary structure, homohexamer or homoheptamer. Organized in a ring with a central cavity.

It is found in the mitochondrion matrix. It carries out the reaction Hydrolysis of proteins in presence of ATP.. In terms of biological role, ATP-dependent serine protease that mediates the selective degradation of misfolded, unassembled or oxidatively damaged polypeptides as well as certain short-lived regulatory proteins in the mitochondrial matrix. May also have a chaperone function in the assembly of inner membrane protein complexes. Participates in the regulation of mitochondrial gene expression and in the maintenance of the integrity of the mitochondrial genome. Binds to mitochondrial DNA in a site-specific manner. The chain is Lon protease homolog, mitochondrial from Candida albicans (strain SC5314 / ATCC MYA-2876) (Yeast).